A 56-amino-acid chain; its full sequence is uncharacterized protein (56 aa).

Residues 33–53 (INIIYLAIMKIIMNIIMMIMI) form a helical membrane-spanning segment.

It localises to the host membrane. This is an uncharacterized protein from Bos taurus (Bovine).